The chain runs to 489 residues: Ribulose bisphosphate carboxylase large chain (489 aa).

Substrate-binding residues include Asn-128 and Thr-178. Lys-180 acts as the Proton acceptor in catalysis. Substrate is bound at residue Lys-182. Lys-206, Asp-208, and Glu-209 together coordinate Mg(2+). At Lys-206 the chain carries N6-carboxylysine. His-298 functions as the Proton acceptor in the catalytic mechanism. Residues Arg-299, His-331, and Ser-383 each coordinate substrate.

Belongs to the RuBisCO large chain family. Type I subfamily. As to quaternary structure, heterohexadecamer of 8 large chains and 8 small chains. Mg(2+) serves as cofactor.

The enzyme catalyses 2 (2R)-3-phosphoglycerate + 2 H(+) = D-ribulose 1,5-bisphosphate + CO2 + H2O. It carries out the reaction D-ribulose 1,5-bisphosphate + O2 = 2-phosphoglycolate + (2R)-3-phosphoglycerate + 2 H(+). In terms of biological role, ruBisCO catalyzes two reactions: the carboxylation of D-ribulose 1,5-bisphosphate, the primary event in carbon dioxide fixation, as well as the oxidative fragmentation of the pentose substrate. Both reactions occur simultaneously and in competition at the same active site. The chain is Ribulose bisphosphate carboxylase large chain from Nitrosospira multiformis (strain ATCC 25196 / NCIMB 11849 / C 71).